Reading from the N-terminus, the 764-residue chain is Reticulon-1 (764 aa).

Disordered stretches follow at residues methionine 1–leucine 37, proline 115–glutamate 147, leucine 247–glutamate 400, and glutamate 455–methionine 475. Residues valine 261–glycine 282 are compositionally biased toward polar residues. A compositionally biased stretch (basic and acidic residues) spans glutamate 328–glutamate 337. In terms of domain architecture, Reticulon spans alanine 578 to glutamate 764. The next 2 membrane-spanning stretches (helical) occupy residues phenylalanine 607–phenylalanine 627 and valine 696–methionine 716.

The protein resides in the endoplasmic reticulum membrane. It is found in the nucleus. Functionally, inhibits amyloid precursor protein processing, probably by blocking BACE1 activity. The chain is Reticulon-1 from Xenopus tropicalis (Western clawed frog).